We begin with the raw amino-acid sequence, 857 residues long: Elongation factor 2 (857 aa).

In terms of domain architecture, tr-type G spans 17-362 (ANIRNMSVIA…MITIHLPSPV (346 aa)). GTP is bound at residue 26-33 (AHVDHGKS). Residues threonine 54, threonine 57, and threonine 59 each carry the phosphothreonine modification. Position 152 is an N6-succinyllysine (lysine 152). GTP contacts are provided by residues 158–161 (NKMD) and 216–218 (SGL). Lysine 235 carries the N6-acetyllysine modification. N6-acetyllysine; alternate is present on lysine 239. Residue lysine 239 forms a Glycyl lysine isopeptide (Lys-Gly) (interchain with G-Cter in SUMO1); alternate linkage. At tyrosine 265 the chain carries Phosphotyrosine. An N6-acetyllysine; alternate modification is found at lysine 272. Lysine 272 carries the N6-succinyllysine; alternate modification. An N6-acetyllysine modification is found at lysine 275. Residue lysine 322 forms a Glycyl lysine isopeptide (Lys-Gly) (interchain with G-Cter in SUMO) linkage. Serine 325 carries the post-translational modification Phosphoserine. The residue at position 373 (tyrosine 373) is a Phosphotyrosine. A Phosphothreonine modification is found at threonine 435. 2 positions are modified to N6-acetyllysine: lysine 439 and lysine 445. Serine 502 carries the post-translational modification Phosphoserine. The residue at position 525 (lysine 525) is an N6,N6,N6-trimethyllysine. Residue lysine 529 forms a Glycyl lysine isopeptide (Lys-Gly) (interchain with G-Cter in SUMO) linkage. An N6-succinyllysine modification is found at lysine 572. The residue at position 595 (serine 595) is a Phosphoserine. Lysine 619 bears the N6-acetyllysine mark. Diphthamide is present on histidine 715.

The protein belongs to the GTP-binding elongation factor family. EF-G/EF-2 subfamily. In terms of assembly, binds to 80S ribosomes. Actively translating ribosomes show mutually exclusive binding of eIF5a (EIF5A or EIF5A2) and EEF2/eEF2. Interacts with SERBP1; interaction sequesters EEF2/eEF2 at the A-site of the ribosome, thereby blocking the interaction sites of the mRNA-tRNA complex, promoting ribosome stabilization and hibernation. Interacts with HABP4; interaction takes place at the A-site of hibernating ribosomes and promotes ribosome stabilization. Component of the mRNA surveillance SURF complex, at least composed of ERF1, ERF3 (ERF3A or ERF3B), EEF2, UPF1/RENT1, SMG1, SMG8 and SMG9. Interacts with RBPMS2. Phosphorylation by EF-2 kinase completely inactivates EF-2; it requires prior phosphorylation by CDK2 at Ser-595 during mitotic prometaphase. Phosphorylation by CSK promotes SUMOylation, proteolytic cleavage, and nuclear translocation if the C-terminal fragment. Post-translationally, diphthamide is 2-[3-carboxyamido-3-(trimethyl-ammonio)propyl]histidine. In terms of processing, ISGylated. Proteolytically processed at two sites following phosphorylation by CSK. Post-translationally, SUMOylated following phosphorylation by CSK, promotes proteolytic cleavage.

The protein resides in the cytoplasm. It is found in the nucleus. It carries out the reaction GTP + H2O = GDP + phosphate + H(+). Catalyzes the GTP-dependent ribosomal translocation step during translation elongation. During this step, the ribosome changes from the pre-translocational (PRE) to the post-translocational (POST) state as the newly formed A-site-bound peptidyl-tRNA and P-site-bound deacylated tRNA move to the P and E sites, respectively. Catalyzes the coordinated movement of the two tRNA molecules, the mRNA and conformational changes in the ribosome. The sequence is that of Elongation factor 2 (EEF2) from Oryctolagus cuniculus (Rabbit).